The primary structure comprises 87 residues: Small polypeptide DEVIL 11 (87 aa).

Over residues 1 to 11 (MASSSSLTRSG) the composition is skewed to polar residues. Residues 1 to 47 (MASSSSLTRSGSVHLDEKWKLSKKDGGASRITRSSSTSSSSFNGKKQ) are disordered. Residues 14 to 27 (HLDEKWKLSKKDGG) are compositionally biased toward basic and acidic residues. The span at 29 to 41 (SRITRSSSTSSSS) shows a compositional bias: low complexity. Residues 51-82 (AFTRKCARLVKEQRARFYIMRRCVIMLICWRD) are required for DVL/RTFL small polypeptide activity. A helical transmembrane segment spans residues 64–80 (RARFYIMRRCVIMLICW). N-linked (GlcNAc...) asparagine glycosylation is present at Asn83.

It belongs to the DVL/RTFL small polypeptides family.

Its subcellular location is the cell membrane. In terms of biological role, small polypeptide acting as a regulatory molecule which coordinates cellular responses required for differentiation, growth and development, probably by restricting polar cell proliferation in lateral organs and coordinating socket cell recruitment and differentiation at trichome sites. In Arabidopsis thaliana (Mouse-ear cress), this protein is Small polypeptide DEVIL 11.